The chain runs to 411 residues: Glycogen synthase kinase-3 homolog MsK-2 (411 aa).

The Protein kinase domain occupies 74 to 358 (YMAERAVGQG…ALEALVHPFF (285 aa)). Residues 80–88 (VGQGSFGVV) and K103 each bind ATP. Catalysis depends on D199, which acts as the Proton acceptor. Residue Y234 is modified to Phosphotyrosine.

It belongs to the protein kinase superfamily. CMGC Ser/Thr protein kinase family. GSK-3 subfamily. Absent in leaves and petioles while a moderate expression is seen in the stems, roots, and nodes.

The enzyme catalyses L-seryl-[protein] + ATP = O-phospho-L-seryl-[protein] + ADP + H(+). It carries out the reaction L-threonyl-[protein] + ATP = O-phospho-L-threonyl-[protein] + ADP + H(+). This Medicago sativa (Alfalfa) protein is Glycogen synthase kinase-3 homolog MsK-2 (MSK-2).